Here is a 249-residue protein sequence, read N- to C-terminus: Selenoprotein BthD (249 aa).

Positions methionine 1–leucine 22 are disordered. Residues lysine 8–glycine 19 are compositionally biased toward basic and acidic residues. Positions cysteine 34–selenocysteine 37 form a cross-link, cysteinyl-selenocysteine (Cys-Sec); redox-active. Selenocysteine 37 is a non-standard amino acid (selenocysteine). Residues glutamine 122–arginine 249 are disordered. Residue serine 147 is modified to Phosphoserine. Positions glutamate 175–lysine 198 are enriched in basic and acidic residues. A compositionally biased stretch (basic residues) spans threonine 199 to alanine 210.

In terms of tissue distribution, expressed in the developing salivary gland at late stages of embryogenesis. Also expressed in brain, neuroblast and wing disk.

The protein resides in the cytoplasm. It is found in the secreted. May be involved in a redox-related process. Required for survival and specifically for salivary gland morphogenesis. The polypeptide is Selenoprotein BthD (BthD) (Drosophila melanogaster (Fruit fly)).